A 375-amino-acid chain; its full sequence is Alcohol dehydrogenase 1 (375 aa).

Serine 2 is subject to N-acetylserine. Cysteine 47, histidine 68, cysteine 98, cysteine 101, cysteine 104, cysteine 112, and cysteine 175 together coordinate Zn(2+). Residues 200–205 (GLGGVG), aspartate 224, lysine 229, 293–295 (LGV), and arginine 370 contribute to the NAD(+) site.

Belongs to the zinc-containing alcohol dehydrogenase family. Class-I subfamily. Homodimer. Zn(2+) serves as cofactor.

The protein resides in the cytoplasm. It catalyses the reaction a primary alcohol + NAD(+) = an aldehyde + NADH + H(+). The catalysed reaction is a secondary alcohol + NAD(+) = a ketone + NADH + H(+). In Apteryx australis (Southern brown kiwi), this protein is Alcohol dehydrogenase 1 (ADH1).